The sequence spans 282 residues: NAC domain-containing protein 1 (282 aa).

In terms of domain architecture, NAC spans 9 to 161 (LPPGFRFHPT…DWVLCRIYKK (153 aa)). Residues 106-167 (VGIKKALVFY…IYKKKNLGRT (62 aa)) mediate DNA binding. A coiled-coil region spans residues 161-188 (KKNLGRTIEMMKVEEEELEAQNVSTTNN).

In terms of tissue distribution, expressed in roots, stem, flowers, and leaves.

Its subcellular location is the nucleus. In terms of biological role, transcription factor that binds DNA motifs 5'-CGT[AG](5N)NACG[ACT][AC][AT][ACG][ACT]-3' and 5'-CACG[ACT][AC][AT][AGT][CT]-3' in target genes promoters. Promotes leaf senescence and reduces fruit yield and sugar content, probably by establishing abscisic acid (ABA) homeostasis. In Solanum lycopersicum (Tomato), this protein is NAC domain-containing protein 1.